We begin with the raw amino-acid sequence, 334 residues long: Protein CapI (334 aa).

Ser126 is a substrate binding site. Catalysis depends on Tyr151, which acts as the Proton acceptor.

It belongs to the NAD(P)-dependent epimerase/dehydratase family.

The protein operates within capsule biogenesis; capsule polysaccharide biosynthesis. In terms of biological role, required for the biosynthesis of type 1 capsular polysaccharide. This is Protein CapI (capI) from Staphylococcus aureus.